The chain runs to 381 residues: UDP-4-amino-4-deoxy-L-arabinose--oxoglutarate aminotransferase (381 aa).

The residue at position 182 (lysine 182) is an N6-(pyridoxal phosphate)lysine.

Belongs to the DegT/DnrJ/EryC1 family. ArnB subfamily. In terms of assembly, homodimer. Requires pyridoxal 5'-phosphate as cofactor.

The catalysed reaction is UDP-4-amino-4-deoxy-beta-L-arabinose + 2-oxoglutarate = UDP-beta-L-threo-pentopyranos-4-ulose + L-glutamate. Its pathway is nucleotide-sugar biosynthesis; UDP-4-deoxy-4-formamido-beta-L-arabinose biosynthesis; UDP-4-deoxy-4-formamido-beta-L-arabinose from UDP-alpha-D-glucuronate: step 2/3. The protein operates within bacterial outer membrane biogenesis; lipopolysaccharide biosynthesis. Catalyzes the conversion of UDP-4-keto-arabinose (UDP-Ara4O) to UDP-4-amino-4-deoxy-L-arabinose (UDP-L-Ara4N). The modified arabinose is attached to lipid A and is required for resistance to polymyxin and cationic antimicrobial peptides. The chain is UDP-4-amino-4-deoxy-L-arabinose--oxoglutarate aminotransferase from Photorhabdus laumondii subsp. laumondii (strain DSM 15139 / CIP 105565 / TT01) (Photorhabdus luminescens subsp. laumondii).